The sequence spans 434 residues: MQVTVETLEGLERRLNITVPAANIEDAVTAELRNIAKNRRFDGFRKGKVPLKMVAKMYGKAVRQDVLGEVMQRHFIEAIVKEKINPAGAPTFAPVENKEGADLVFTATFEVYPEVELKGLENITVEKPLTEVKEADVEEMIETLRKQQATWVEVEEAAEAGKRVSIDFVGSIDGEEFEGGKAENFPLEMGAGRMIPGFEDGIAGKTAGMEFDIDVTFPEDYHAENLKGKAAKFAIKVNKVEARELPELNDEFVAKFGVAEGGVDALKAEVRKNMERELKQAVKTRIKEQAIEGLVKENEIDVPAALIEQEIHVLRQQAAQRFGGNPEAAAQLPRELFEEQAKRRVVVGLLLGEVIKSEELKADDEKVKALIEEMATAYEDPSEVIAYYEQNEQMMNNMRNVALEEQAIDAIIAKAQVTEKEVGFNELLNQQPAA.

Residues Gly-161–Pro-246 form the PPIase FKBP-type domain.

It belongs to the FKBP-type PPIase family. Tig subfamily.

It is found in the cytoplasm. It catalyses the reaction [protein]-peptidylproline (omega=180) = [protein]-peptidylproline (omega=0). In terms of biological role, involved in protein export. Acts as a chaperone by maintaining the newly synthesized protein in an open conformation. Functions as a peptidyl-prolyl cis-trans isomerase. In Vibrio parahaemolyticus serotype O3:K6 (strain RIMD 2210633), this protein is Trigger factor.